We begin with the raw amino-acid sequence, 202 residues long: Small ribosomal subunit protein uS4 (202 aa).

The interval 18–42 is disordered; that stretch reads LPGLTRKAAKRSYPPGQHGQARRKR. The 63-residue stretch at 90 to 152 folds into the S4 RNA-binding domain; that stretch reads NRLDNVCFRL…KPSKKLAETN (63 aa).

It belongs to the universal ribosomal protein uS4 family. In terms of assembly, part of the 30S ribosomal subunit. Contacts protein S5. The interaction surface between S4 and S5 is involved in control of translational fidelity.

Functionally, one of the primary rRNA binding proteins, it binds directly to 16S rRNA where it nucleates assembly of the body of the 30S subunit. In terms of biological role, with S5 and S12 plays an important role in translational accuracy. The protein is Small ribosomal subunit protein uS4 of Synechococcus sp. (strain RCC307).